The sequence spans 116 residues: Putative iron-sulfur cluster insertion protein ErpA (116 aa).

Iron-sulfur cluster-binding residues include Cys-44, Cys-108, and Cys-110.

The protein belongs to the HesB/IscA family. In terms of assembly, homodimer. Iron-sulfur cluster serves as cofactor.

Required for insertion of 4Fe-4S clusters. This is Putative iron-sulfur cluster insertion protein ErpA from Thiobacillus denitrificans (strain ATCC 25259 / T1).